The primary structure comprises 103 residues: Fe-S cluster assembly protein DRE2 (103 aa).

Positions 19-103 (KQDPRHRIPM…EGDEINFDEL (85 aa)) are disordered. [2Fe-2S] cluster is bound by residues C42, C50, C53, and C55. A fe-S binding site A region spans residues 42-55 (CRENKARKCSNCTC). The [4Fe-4S] cluster site is built by C70, C73, C81, and C84. Short sequence motifs (cx2C motif) lie at residues 70–73 (CGSC) and 81–84 (CSSC). A fe-S binding site B region spans residues 70-84 (CGSCHLGDPFRCSSC).

The protein belongs to the anamorsin family. As to quaternary structure, monomer. Interacts with TAH18. Interacts with MIA40. [4Fe-4S] cluster serves as cofactor.

Its subcellular location is the cytoplasm. The protein resides in the mitochondrion intermembrane space. Functionally, component of the cytosolic iron-sulfur (Fe-S) protein assembly (CIA) machinery required for the maturation of extramitochondrial Fe-S proteins. Part of an electron transfer chain functioning in an early step of cytosolic Fe-S biogenesis, facilitating the de novo assembly of a [4Fe-4S] cluster on the scaffold complex CFD1-NBP35. Electrons are transferred to DRE2 from NADPH via the FAD- and FMN-containing protein TAH18. TAH18-DRE2 are also required for the assembly of the diferric tyrosyl radical cofactor of ribonucleotide reductase (RNR), probably by providing electrons for reduction during radical cofactor maturation in the catalytic small subunit RNR2. In Enterocytozoon bieneusi (strain H348) (Microsporidian parasite), this protein is Fe-S cluster assembly protein DRE2 (DRE2).